The primary structure comprises 375 residues: Geranylgeranyl transferase type-1 subunit beta (375 aa).

The segment at Met1 to Ala33 is disordered. Position 2 is an N-acetylserine (Ser2). PFTB repeat units follow at residues Ser157–Asp199, Lys206–Gly247, Pro265–Gly306, and Lys313–Glu354. Geranylgeranyl diphosphate is bound by residues His232 to Gly234 and Arg285 to Lys288. Residues Asp291 and Cys293 each contribute to the Zn(2+) site. Tyr294–Trp297 contacts geranylgeranyl diphosphate. His342 provides a ligand contact to Zn(2+).

It belongs to the protein prenyltransferase subunit beta family. As to quaternary structure, heterodimer of an alpha and a beta subunit. Requires Zn(2+) as cofactor. Mg(2+) is required as a cofactor. Expressed in roots, leaves, stems, flowers and siliques.

The catalysed reaction is geranylgeranyl diphosphate + L-cysteinyl-[protein] = S-geranylgeranyl-L-cysteinyl-[protein] + diphosphate. Functionally, catalyzes the transfer of a geranyl-geranyl moiety from geranyl-geranyl pyrophosphate to a cysteine at the fourth position from the C-terminus of proteins having the C-terminal sequence Cys-aliphatic-aliphatic-X (CaaX). Seems to exclusively prenylate CaaX substrates with leucine in the terminal position. The beta subunit is responsible for peptide-binding. May negatively regulate abscisic acid (ABA) signaling in guard cells and auxin-induced lateral root initiation. Its function is as follows. Negatively regulates ABA signaling in guard cells. in negative regulation of auxin-induced lateral root initiation. The protein is Geranylgeranyl transferase type-1 subunit beta (GGB) of Arabidopsis thaliana (Mouse-ear cress).